A 313-amino-acid polypeptide reads, in one-letter code: ADP-L-glycero-D-manno-heptose-6-epimerase (313 aa).

Residues 10-11 (MI), 31-32 (DN), Lys-38, Lys-53, 75-79 (EGACS), and Asn-92 contribute to the NADP(+) site. Tyr-139 (proton acceptor) is an active-site residue. Lys-143 serves as a coordination point for NADP(+). Residue Asn-174 coordinates substrate. 2 residues coordinate NADP(+): Val-175 and Lys-183. Catalysis depends on Lys-183, which acts as the Proton acceptor. Substrate is bound by residues Ser-185, His-192, 206–209 (FEGS), Arg-214, and Tyr-277.

Belongs to the NAD(P)-dependent epimerase/dehydratase family. HldD subfamily. Homopentamer. Requires NADP(+) as cofactor.

The catalysed reaction is ADP-D-glycero-beta-D-manno-heptose = ADP-L-glycero-beta-D-manno-heptose. It functions in the pathway nucleotide-sugar biosynthesis; ADP-L-glycero-beta-D-manno-heptose biosynthesis; ADP-L-glycero-beta-D-manno-heptose from D-glycero-beta-D-manno-heptose 7-phosphate: step 4/4. Catalyzes the interconversion between ADP-D-glycero-beta-D-manno-heptose and ADP-L-glycero-beta-D-manno-heptose via an epimerization at carbon 6 of the heptose. The sequence is that of ADP-L-glycero-D-manno-heptose-6-epimerase from Aliivibrio fischeri (strain ATCC 700601 / ES114) (Vibrio fischeri).